Here is a 464-residue protein sequence, read N- to C-terminus: tRNA-2-methylthio-N(6)-dimethylallyladenosine synthase (464 aa).

The segment at 1-25 (MSDLVPLSRKPAPAAGDPAPSPAAP) is disordered. The region spanning 27–142 (RKVYVHTFGC…LPEMVERARG (116 aa)) is the MTTase N-terminal domain. Residues Cys-36, Cys-72, Cys-105, Cys-180, Cys-184, and Cys-187 each contribute to the [4Fe-4S] cluster site. One can recognise a Radical SAM core domain in the interval 166 to 398 (ARGRATAFVT…LAAQRRIAGE (233 aa)). Residues 401–464 (AAELGKVVEV…GGSSLSGTLA (64 aa)) enclose the TRAM domain.

It belongs to the methylthiotransferase family. MiaB subfamily. As to quaternary structure, monomer. [4Fe-4S] cluster serves as cofactor.

It localises to the cytoplasm. It catalyses the reaction N(6)-dimethylallyladenosine(37) in tRNA + (sulfur carrier)-SH + AH2 + 2 S-adenosyl-L-methionine = 2-methylsulfanyl-N(6)-dimethylallyladenosine(37) in tRNA + (sulfur carrier)-H + 5'-deoxyadenosine + L-methionine + A + S-adenosyl-L-homocysteine + 2 H(+). Catalyzes the methylthiolation of N6-(dimethylallyl)adenosine (i(6)A), leading to the formation of 2-methylthio-N6-(dimethylallyl)adenosine (ms(2)i(6)A) at position 37 in tRNAs that read codons beginning with uridine. This is tRNA-2-methylthio-N(6)-dimethylallyladenosine synthase from Anaeromyxobacter dehalogenans (strain 2CP-C).